A 171-amino-acid chain; its full sequence is Iron-sulfur cluster assembly protein 3 (171 aa).

The transit peptide at 1-49 directs the protein to the mitochondrion; sequence MLRQTTKRAFLGLASQNPTPFPVVSRLYHPNVIDHYDNPRNVGSFDKND.

It belongs to the NifU family. In terms of assembly, component of the core Fe-S cluster (ISC) assembly machinery. It depends on [2Fe-2S] cluster as a cofactor. As to expression, mostly expressed in flowers and pollen, and, to a lower extent, in leaves and roots.

It localises to the mitochondrion matrix. It functions in the pathway cofactor biosynthesis; iron-sulfur cluster biosynthesis. Its function is as follows. Scaffold protein for the de novo synthesis of iron-sulfur (Fe-S) clusters within mitochondria, which is required for maturation of both mitochondrial and cytoplasmic [2Fe-2S] and [4Fe-4S] proteins. First, a [2Fe-2S] cluster is transiently assembled on the scaffold protein ISCU (ISU1, ISU2 or ISU3). In a second step, the cluster is released from ISCU, transferred to a glutaredoxin, followed by the formation of mitochondrial [2Fe-2S] proteins, the synthesis of [4Fe-4S] clusters and their target-specific insertion into the recipient apoproteins. Cluster assembly on ISCU depends on the function of the cysteine desulfurase complex NFS1-ISD11, which serves as the sulfur donor for cluster synthesis, the iron-binding protein frataxin as the putative iron donor, and the electron transfer chain comprised of ferredoxin reductase and ferredoxin, which receive their electrons from NADH. This Arabidopsis thaliana (Mouse-ear cress) protein is Iron-sulfur cluster assembly protein 3 (ISU3).